A 476-amino-acid polypeptide reads, in one-letter code: Sulfate adenylyltransferase subunit 1 (476 aa).

The tr-type G domain occupies 24–239 (KSMLRFLTCG…VLENVDIDQK (216 aa)). Residues 33–40 (GSVDDGKS) form a G1 region. A GTP-binding site is contributed by 33–40 (GSVDDGKS). Positions 91–95 (GITID) are G2. Positions 112-115 (DTPG) are G3. Residues 112–116 (DTPGH) and 167–170 (NKMD) contribute to the GTP site. The segment at 167 to 170 (NKMD) is G4. Residues 205 to 207 (SAL) are G5.

It belongs to the TRAFAC class translation factor GTPase superfamily. Classic translation factor GTPase family. CysN/NodQ subfamily. Heterodimer composed of CysD, the smaller subunit, and CysN.

The catalysed reaction is sulfate + ATP + H(+) = adenosine 5'-phosphosulfate + diphosphate. It participates in sulfur metabolism; hydrogen sulfide biosynthesis; sulfite from sulfate: step 1/3. Its function is as follows. With CysD forms the ATP sulfurylase (ATPS) that catalyzes the adenylation of sulfate producing adenosine 5'-phosphosulfate (APS) and diphosphate, the first enzymatic step in sulfur assimilation pathway. APS synthesis involves the formation of a high-energy phosphoric-sulfuric acid anhydride bond driven by GTP hydrolysis by CysN coupled to ATP hydrolysis by CysD. The chain is Sulfate adenylyltransferase subunit 1 from Vibrio atlanticus (strain LGP32) (Vibrio splendidus (strain Mel32)).